Consider the following 208-residue polypeptide: Type 4 adapter protein LvgA (208 aa).

The interval 184-208 (GYGYPPESPRENYKHPVSSATTARK) is disordered.

The T4BSS is a complex nanomachine composed of several subcomplexes. This subunit is part of the Type IV Coupling Complex (T4CC), a subcomplex composed of the DotLMNYZ core and the IcmSW-LvgA adapter subunits, linked by the C-terminal tail of DotL.

Its subcellular location is the cytoplasm. In terms of biological role, component of the Dot/Icm type IVB secretion system (T4BSS), which is used to inject bacterial effector proteins into eukaryotic host cells. Part of a subcomplex which recruits effector proteins and delivers them to the core transmembrane subcomplex. Is a critical subunit for binding a subset of effector proteins. Recognizes more than one type of binding motif. May be a critical factor that confers host specificity. Necessary for full virulence of the bacterium in guinea pigs and presumably humans. This Legionella pneumophila protein is Type 4 adapter protein LvgA.